Here is a 100-residue protein sequence, read N- to C-terminus: Apolipoprotein C-II (100 aa).

The N-terminal stretch at 1–22 is a signal peptide; that stretch reads MGTRFLLALFLVLLVLGFEVQG. Positions 66–74 are lipid binding; the sequence is TVDEKLRDM. The lipoprotein lipase cofactor stretch occupies residues 78 to 100; sequence STAAVSTYAGIFTDQLLTLLKGD.

This sequence belongs to the apolipoprotein C2 family. Proapolipoprotein C-II is synthesized as a sialic acid containing glycoprotein which is subsequently desialylated prior to its proteolytic processing. Post-translationally, proapolipoprotein C-II, the major form found in plasma undergoes proteolytic cleavage of its N-terminal hexapeptide to generate apolipoprotein C-II, which occurs as the minor form in plasma.

The protein resides in the secreted. Functionally, component of chylomicrons, very low-density lipoproteins (VLDL), low-density lipoproteins (LDL), and high-density lipoproteins (HDL) in plasma. Plays an important role in lipoprotein metabolism as an activator of lipoprotein lipase. Both proapolipoprotein C-II and apolipoprotein C-II can activate lipoprotein lipase. The protein is Apolipoprotein C-II (APOC2) of Otolemur garnettii (Small-eared galago).